The following is a 376-amino-acid chain: Cytochrome b (376 aa).

4 helical membrane-spanning segments follow: residues tyrosine 28 to serine 48, tryptophan 72 to leucine 94, serine 107 to valine 127, and phenylalanine 169 to phenylalanine 189. Heme b is bound by residues histidine 78 and histidine 92. Heme b contacts are provided by histidine 173 and histidine 187. Histidine 192 contributes to the a ubiquinone binding site. Helical transmembrane passes span leucine 214–leucine 234, valine 274–leucine 294, valine 317–proline 337, and isoleucine 340–leucine 360.

This sequence belongs to the cytochrome b family. In terms of assembly, the main subunits of complex b-c1 are: cytochrome b, cytochrome c1 and the Rieske protein. Requires heme b as cofactor.

Its subcellular location is the mitochondrion inner membrane. Its function is as follows. Component of the ubiquinol-cytochrome c reductase complex (complex III or cytochrome b-c1 complex) that is part of the mitochondrial respiratory chain. The b-c1 complex mediates electron transfer from ubiquinol to cytochrome c. Contributes to the generation of a proton gradient across the mitochondrial membrane that is then used for ATP synthesis. The polypeptide is Cytochrome b (MT-CYB) (Plasmodium falciparum).